A 1416-amino-acid chain; its full sequence is DNA-directed RNA polymerase subunit beta' (1416 aa).

Residues Cys-71, Cys-73, Cys-86, and Cys-89 each coordinate Zn(2+). Mg(2+) is bound by residues Asp-461, Asp-463, and Asp-465. Residues Cys-815, Cys-889, Cys-896, and Cys-899 each contribute to the Zn(2+) site.

The protein belongs to the RNA polymerase beta' chain family. The RNAP catalytic core consists of 2 alpha, 1 beta, 1 beta' and 1 omega subunit. When a sigma factor is associated with the core the holoenzyme is formed, which can initiate transcription. Mg(2+) is required as a cofactor. The cofactor is Zn(2+).

It catalyses the reaction RNA(n) + a ribonucleoside 5'-triphosphate = RNA(n+1) + diphosphate. Its function is as follows. DNA-dependent RNA polymerase catalyzes the transcription of DNA into RNA using the four ribonucleoside triphosphates as substrates. The chain is DNA-directed RNA polymerase subunit beta' from Haemophilus influenzae (strain PittEE).